The sequence spans 841 residues: Putative helicase R592 (841 aa).

A Helicase ATP-binding domain is found at 72–309 (STFVIETNSA…RRYVNKIFGQ (238 aa)). 85–92 (DKVGAGKT) provides a ligand contact to ATP. Residues 195–205 (KLPVKTTKKGG) are compositionally biased toward basic residues. The disordered stretch occupies residues 195–215 (KLPVKTTKKGGSKTQNKAQND). A compositionally biased stretch (polar residues) spans 206–215 (SKTQNKAQND). A DEAD box motif is present at residues 266–269 (DEMD). A coiled-coil region spans residues 413 to 450 (QDVDAHENRKKNIMNNIARCKTKLESIKEKINSIKDEC). The segment at 451 to 491 (CFICTDPFENPTIMNCCKSIFCLKCLLTTLKTVGSKCPYCR) adopts an RING-type; degenerate zinc-finger fold. Residues 531 to 682 (VLEQVLSYIS…WMITNPTDLN (152 aa)) enclose the Helicase C-terminal domain. Residues 678–841 (PTDLNEEPDE…KAPVRKLIKV (164 aa)) are disordered. The span at 681-697 (LNEEPDEESDEGSDEDV) shows a compositional bias: acidic residues. The segment covering 698-725 (EKSKDKKSSDKKSSDKKKSEKKSSDKKS) has biased composition (basic and acidic residues). Positions 726-749 (SNKKNSKKKTYVKPKSSKKTSQKV) are enriched in basic residues. Acidic residues-rich tracts occupy residues 765 to 774 (DSDDLDDSDD) and 782 to 804 (SDSDDFGNLSDSDDLSDSDESEI). Composition is skewed to basic residues over residues 809 to 821 (KSKKTSKSSKKNK) and 828 to 841 (TLKKKAPVRKLIKV).

The chain is Putative helicase R592 from Acanthamoeba polyphaga mimivirus (APMV).